The sequence spans 80 residues: Metallothionein-like protein 1 (80 aa).

It belongs to the metallothionein superfamily. Type 15 family.

Metallothioneins have a high content of cysteine residues that bind various heavy metals. In Coffea arabica (Arabian coffee), this protein is Metallothionein-like protein 1 (METAL1).